A 316-amino-acid chain; its full sequence is uncharacterized protein (316 aa).

The S4 RNA-binding domain maps to 26–98; the sequence is ERIDRFLAGA…IPLDVVYEDA (73 aa). Residue aspartate 148 is part of the active site.

Belongs to the pseudouridine synthase RluA family.

It catalyses the reaction a uridine in RNA = a pseudouridine in RNA. This is an uncharacterized protein from Chloroflexus aurantiacus (strain ATCC 29366 / DSM 635 / J-10-fl).